The primary structure comprises 133 residues: Small ribosomal subunit protein uS8c (133 aa).

Belongs to the universal ribosomal protein uS8 family. As to quaternary structure, part of the 30S ribosomal subunit.

The protein localises to the plastid. It localises to the chloroplast. One of the primary rRNA binding proteins, it binds directly to 16S rRNA central domain where it helps coordinate assembly of the platform of the 30S subunit. The polypeptide is Small ribosomal subunit protein uS8c (rps8) (Pyropia yezoensis (Susabi-nori)).